Reading from the N-terminus, the 231-residue chain is Large ribosomal subunit protein uL1 (231 aa).

This sequence belongs to the universal ribosomal protein uL1 family. In terms of assembly, part of the 50S ribosomal subunit.

Binds directly to 23S rRNA. The L1 stalk is quite mobile in the ribosome, and is involved in E site tRNA release. In terms of biological role, protein L1 is also a translational repressor protein, it controls the translation of the L11 operon by binding to its mRNA. This chain is Large ribosomal subunit protein uL1, found in Acinetobacter baumannii (strain AB0057).